Reading from the N-terminus, the 505-residue chain is Catalase (505 aa).

Positions 1–25 (MSQQDKKLTGVFGHPVSDRENSMTA) are disordered. Active-site residues include histidine 56 and asparagine 129. Tyrosine 339 serves as a coordination point for heme.

Belongs to the catalase family. Homodimer. Heme serves as cofactor.

The catalysed reaction is 2 H2O2 = O2 + 2 H2O. Decomposes hydrogen peroxide into water and oxygen; serves to protect cells from the toxic effects of hydrogen peroxide. This is Catalase (katA) from Staphylococcus aureus (strain MSSA476).